We begin with the raw amino-acid sequence, 588 residues long: ATP-dependent lipid A-core flippase (588 aa).

6 helical membrane-spanning segments follow: residues 23–43, 56–76, 141–161, 162–182, 257–277, and 278–298; these read FWPV…IDAG, FITI…IGIT, DALT…TVMM, VICW…GIIV, LVIA…STVI, and TISA…IKPM. The ABC transmembrane type-1 domain maps to 28-310; that stretch reads LLGVLANILY…LTTLNATIQR (283 aa). Residues 342–576 enclose the ABC transporter domain; sequence IEFKHVYHAY…DGHYAQLYKV (235 aa). Position 375 to 382 (375 to 382) interacts with ATP; the sequence is GHSGSGKT.

This sequence belongs to the ABC transporter superfamily. Lipid exporter (TC 3.A.1.106) family. Homodimer.

It is found in the cell inner membrane. The catalysed reaction is ATP + H2O + lipid A-core oligosaccharideSide 1 = ADP + phosphate + lipid A-core oligosaccharideSide 2.. Functionally, involved in lipopolysaccharide (LPS) biosynthesis. Translocates lipid A-core from the inner to the outer leaflet of the inner membrane. Transmembrane domains (TMD) form a pore in the inner membrane and the ATP-binding domain (NBD) is responsible for energy generation. This Legionella pneumophila (strain Lens) protein is ATP-dependent lipid A-core flippase.